A 357-amino-acid polypeptide reads, in one-letter code: DNA replication and repair protein RecF (357 aa).

31-38 (GQNGAGKT) is an ATP binding site.

It belongs to the RecF family.

It localises to the cytoplasm. Functionally, the RecF protein is involved in DNA metabolism; it is required for DNA replication and normal SOS inducibility. RecF binds preferentially to single-stranded, linear DNA. It also seems to bind ATP. The chain is DNA replication and repair protein RecF from Coxiella burnetii (strain CbuG_Q212) (Coxiella burnetii (strain Q212)).